The sequence spans 338 residues: tRNA-cytidine(32) 2-sulfurtransferase (338 aa).

The PP-loop motif signature appears at 86–91; that stretch reads SGGKDS. [4Fe-4S] cluster-binding residues include Cys161, Cys164, and Cys252.

This sequence belongs to the TtcA family. As to quaternary structure, homodimer. It depends on Mg(2+) as a cofactor. Requires [4Fe-4S] cluster as cofactor.

Its subcellular location is the cytoplasm. It carries out the reaction cytidine(32) in tRNA + S-sulfanyl-L-cysteinyl-[cysteine desulfurase] + AH2 + ATP = 2-thiocytidine(32) in tRNA + L-cysteinyl-[cysteine desulfurase] + A + AMP + diphosphate + H(+). The protein operates within tRNA modification. Catalyzes the ATP-dependent 2-thiolation of cytidine in position 32 of tRNA, to form 2-thiocytidine (s(2)C32). The sulfur atoms are provided by the cysteine/cysteine desulfurase (IscS) system. This Albidiferax ferrireducens (strain ATCC BAA-621 / DSM 15236 / T118) (Rhodoferax ferrireducens) protein is tRNA-cytidine(32) 2-sulfurtransferase.